The primary structure comprises 156 residues: Large ribosomal subunit protein uL22 (156 aa).

Belongs to the universal ribosomal protein uL22 family. Part of the 50S ribosomal subunit.

Its function is as follows. This protein binds specifically to 23S rRNA. It makes multiple contacts with different domains of the 23S rRNA in the assembled 50S subunit and ribosome. Functionally, the globular domain of the protein is located near the polypeptide exit tunnel on the outside of the subunit, while an extended beta-hairpin is found that lines the wall of the exit tunnel in the center of the 70S ribosome. This chain is Large ribosomal subunit protein uL22, found in Hyperthermus butylicus (strain DSM 5456 / JCM 9403 / PLM1-5).